We begin with the raw amino-acid sequence, 363 residues long: Ribosome-binding ATPase YchF (363 aa).

The OBG-type G domain occupies Phe3–Lys257. Asn12–Thr17 contributes to the ATP binding site. Mg(2+)-binding residues include Ser16 and Thr36. Positions Asn278–Tyr361 constitute a TGS domain.

Belongs to the TRAFAC class OBG-HflX-like GTPase superfamily. OBG GTPase family. YchF/OLA1 subfamily. Mg(2+) is required as a cofactor.

Functionally, ATPase that binds to both the 70S ribosome and the 50S ribosomal subunit in a nucleotide-independent manner. This is Ribosome-binding ATPase YchF from Buchnera aphidicola subsp. Baizongia pistaciae (strain Bp).